Reading from the N-terminus, the 89-residue chain is Small ribosomal subunit protein uS17 (89 aa).

The protein belongs to the universal ribosomal protein uS17 family. Part of the 30S ribosomal subunit.

One of the primary rRNA binding proteins, it binds specifically to the 5'-end of 16S ribosomal RNA. This chain is Small ribosomal subunit protein uS17, found in Polaromonas naphthalenivorans (strain CJ2).